A 332-amino-acid polypeptide reads, in one-letter code: NADH-quinone oxidoreductase subunit H (332 aa).

The next 9 helical transmembrane spans lie at 4 to 24 (FAFFALETLIKCIIIIAIFAS), 44 to 64 (IGPDMVGPFGLIQLVADMIKL), 78 to 98 (FIFAIAPLISAICAFVSLAAI), 120 to 140 (VALLFVIGTSGLCFYAVFLGG), 165 to 185 (VGALALIAIIMLVGSFSLVDI), 194 to 214 (FSWLIFKQPLAFVLFIIALFI), 255 to 275 (IAGAILVTLLFLGGFNSFWII), 279 to 299 (IMMIVKSSFIFFWYFWARAAF), and 312 to 332 (YLILIPLAVLNLLITALTVLL).

It belongs to the complex I subunit 1 family. In terms of assembly, NDH-1 is composed of 14 different subunits. Subunits NuoA, H, J, K, L, M, N constitute the membrane sector of the complex.

The protein localises to the cell inner membrane. The catalysed reaction is a quinone + NADH + 5 H(+)(in) = a quinol + NAD(+) + 4 H(+)(out). In terms of biological role, NDH-1 shuttles electrons from NADH, via FMN and iron-sulfur (Fe-S) centers, to quinones in the respiratory chain. The immediate electron acceptor for the enzyme in this species is believed to be ubiquinone. Couples the redox reaction to proton translocation (for every two electrons transferred, four hydrogen ions are translocated across the cytoplasmic membrane), and thus conserves the redox energy in a proton gradient. This subunit may bind ubiquinone. This Campylobacter jejuni subsp. jejuni serotype O:23/36 (strain 81-176) protein is NADH-quinone oxidoreductase subunit H.